Reading from the N-terminus, the 414-residue chain is MNVTVRFLRPFARCLVPYTFHRKRSHLYSGVLQRYMSSKAPSLSCHNKDSASPPEQLELDGWKATMKSSIQEDGVSEVSDKDEDSLASTRELIEMWRLLGKEVPEHITEEDLKTLMECASKSAKKKYLRYLYGKEKAKKAKQVKKEMKAEAREEAKRARLLETTAEEQQQDFMFLRLWDRQINIALGWKGVQAMQFGQPLVFDMAYDNYMKPSELQNTVSQLLESEGWNRRNVDPFHIYFCNLKIDSAYHRELVKRYREKWDKLLLTATEKSPVDLFPKDSIIYLTADSPNVMTTFKHDKIYIIGSFVDKNTQTGTSLAKAKRLNIATECLPLDKYLQWEIGNKNLTLDQMIRILLCLKNTGNWEEALKFVPRRKHTGYLEVSEQSQELVRKLKKTKTLNSFRKGSLNVRTWKR.

Residues 1–35 (MNVTVRFLRPFARCLVPYTFHRKRSHLYSGVLQRY) constitute a mitochondrion transit peptide. Ser-79 is subject to Phosphoserine. A coiled-coil region spans residues 133-171 (GKEKAKKAKQVKKEMKAEAREEAKRARLLETTAEEQQQD). Residues 186-378 (LGWKGVQAMQ…KFVPRRKHTG (193 aa)) enclose the SAM-dependent MTase TRM10-type domain.

It belongs to the class IV-like SAM-binding methyltransferase superfamily. TRM10 family. As to quaternary structure, component of mitochondrial ribonuclease P, a complex composed of TRMT10C/MRPP1, HSD17B10/MRPP2 and PRORP/MRPP3. Interacts with HSD17B10/MRPP2; forming the MRPP1-MRPP2 subcomplex of the mitochondrial ribonuclease P complex. Interacts with GRSF1.

Its subcellular location is the mitochondrion matrix. It localises to the mitochondrion nucleoid. It carries out the reaction adenosine(9) in tRNA + S-adenosyl-L-methionine = N(1)-methyladenosine(9) in tRNA + S-adenosyl-L-homocysteine + H(+). The enzyme catalyses guanosine(9) in tRNA + S-adenosyl-L-methionine = N(1)-methylguanosine(9) in tRNA + S-adenosyl-L-homocysteine + H(+). The catalysed reaction is an adenosine in mRNA + S-adenosyl-L-methionine = an N(1)-methyladenosine in mRNA + S-adenosyl-L-homocysteine + H(+). Its function is as follows. Mitochondrial tRNA N(1)-methyltransferase involved in mitochondrial tRNA maturation. Component of mitochondrial ribonuclease P, a complex composed of TRMT10C/MRPP1, HSD17B10/MRPP2 and PRORP/MRPP3, which cleaves tRNA molecules in their 5'-ends. Together with HSD17B10/MRPP2, forms a subcomplex of the mitochondrial ribonuclease P, named MRPP1-MRPP2 subcomplex, which displays functions that are independent of the ribonuclease P activity. The MRPP1-MRPP2 subcomplex catalyzes the formation of N(1)-methylguanine and N(1)-methyladenine at position 9 (m1G9 and m1A9, respectively) in tRNAs; TRMT10C/MRPP1 acting as the catalytic N(1)-methyltransferase subunit. The MRPP1-MRPP2 subcomplex also acts as a tRNA maturation platform: following 5'-end cleavage by the mitochondrial ribonuclease P complex, the MRPP1-MRPP2 subcomplex enhances the efficiency of 3'-processing catalyzed by ELAC2, retains the tRNA product after ELAC2 processing and presents the nascent tRNA to the mitochondrial CCA tRNA nucleotidyltransferase TRNT1 enzyme. In addition to tRNA N(1)-methyltransferase activity, TRMT10C/MRPP1 also acts as a mRNA N(1)-methyltransferase by mediating methylation of adenosine residues at the N(1) position of MT-ND5 mRNA. Associates with mitochondrial DNA complexes at the nucleoids to initiate RNA processing and ribosome assembly. The protein is tRNA methyltransferase 10 homolog C of Mus musculus (Mouse).